The chain runs to 279 residues: Acyl-[acyl-carrier-protein]--UDP-N-acetylglucosamine O-acyltransferase (279 aa).

Belongs to the transferase hexapeptide repeat family. LpxA subfamily. As to quaternary structure, homotrimer.

The protein resides in the cytoplasm. The enzyme catalyses a (3R)-hydroxyacyl-[ACP] + UDP-N-acetyl-alpha-D-glucosamine = a UDP-3-O-[(3R)-3-hydroxyacyl]-N-acetyl-alpha-D-glucosamine + holo-[ACP]. It functions in the pathway glycolipid biosynthesis; lipid IV(A) biosynthesis; lipid IV(A) from (3R)-3-hydroxytetradecanoyl-[acyl-carrier-protein] and UDP-N-acetyl-alpha-D-glucosamine: step 1/6. Its function is as follows. Involved in the biosynthesis of lipid A, a phosphorylated glycolipid that anchors the lipopolysaccharide to the outer membrane of the cell. This is Acyl-[acyl-carrier-protein]--UDP-N-acetylglucosamine O-acyltransferase from Chlamydia pneumoniae (Chlamydophila pneumoniae).